We begin with the raw amino-acid sequence, 397 residues long: Succinate--CoA ligase [ADP-forming] subunit beta (397 aa).

The region spanning 9-254 (KALLKGYGAP…ETEEDAKEIE (246 aa)) is the ATP-grasp domain. ATP contacts are provided by residues Lys-46, 53-55 (GRG), Glu-109, Ala-112, and Glu-117. Asn-209 and Asp-223 together coordinate Mg(2+). Residues Asn-274 and 331 to 333 (GIM) each bind substrate.

Belongs to the succinate/malate CoA ligase beta subunit family. As to quaternary structure, heterotetramer of two alpha and two beta subunits. Mg(2+) serves as cofactor.

It catalyses the reaction succinate + ATP + CoA = succinyl-CoA + ADP + phosphate. The enzyme catalyses GTP + succinate + CoA = succinyl-CoA + GDP + phosphate. Its pathway is carbohydrate metabolism; tricarboxylic acid cycle; succinate from succinyl-CoA (ligase route): step 1/1. Functionally, succinyl-CoA synthetase functions in the citric acid cycle (TCA), coupling the hydrolysis of succinyl-CoA to the synthesis of either ATP or GTP and thus represents the only step of substrate-level phosphorylation in the TCA. The beta subunit provides nucleotide specificity of the enzyme and binds the substrate succinate, while the binding sites for coenzyme A and phosphate are found in the alpha subunit. This is Succinate--CoA ligase [ADP-forming] subunit beta from Rhizobium etli (strain CIAT 652).